Consider the following 460-residue polypeptide: Solute carrier family 52, riboflavin transporter, member 3 (460 aa).

The Cytoplasmic segment spans residues 1–6; sequence MAFLTH. The helical transmembrane segment at 7 to 27 threads the bilayer; the sequence is LLVCVFGMGSWVAINGLWVEL. The Extracellular segment spans residues 28–37; that stretch reads PLLVTELPEA. Residues 38–58 form a helical membrane-spanning segment; the sequence is WYLPSYLTVVIQLANIGPLLV. At 59–71 the chain is on the cytoplasmic side; sequence TLMHRFRPGCLSE. The helical transmembrane segment at 72–92 threads the bilayer; the sequence is VPVIFLILCVGTAACILLAFL. Topologically, residues 93–105 are extracellular; sequence WNVTSWIQGGQHS. An N-linked (GlcNAc...) asparagine glycan is attached at N94. A helical transmembrane segment spans residues 106 to 126; it reads VAFIVLTFFLALVDCTSSVTF. The Cytoplasmic portion of the chain corresponds to 127 to 137; it reads LPFMSQLPTYY. Residues 138 to 158 form a helical membrane-spanning segment; it reads LTTFFIGEGLSGLLPALVALV. At 159–211 the chain is on the extracellular side; it reads QGSGITTCVNVTETPGTTLNTMETPITQGNLSPSLPSPSWHQESRYLAPRFSP. N-linked (GlcNAc...) asparagine glycosylation is present at N168. A helical membrane pass occupies residues 212-232; it reads LLFFLLLSFLTGCCLVAFFLL. Over 233-291 the chain is Cytoplasmic; the sequence is QRQPWGRQGSIEDLLHSQVTLHSIRPRDTEDTSSLGAPVSSPGKGSVEASVASLRPAQL. A phosphoserine mark is found at S242 and S266. The chain crosses the membrane as a helical span at residues 292 to 312; the sequence is AFIYSVVAFVNALTNGVLPSV. At 313–326 the chain is on the extracellular side; it reads QTYSCLPYGPVAYH. Residues 327–347 traverse the membrane as a helical segment; it reads LSATLSSVASPLACFLPIFLP. Over 348–350 the chain is Cytoplasmic; it reads NRS. Residues 351–371 traverse the membrane as a helical segment; the sequence is LLFLGVLTVLGTGFGAYNMAM. Topologically, residues 372–387 are extracellular; sequence AAMSPCPVLQGHWGGE. Residues C377 and C454 are joined by a disulfide bond. Residues 388–408 traverse the membrane as a helical segment; it reads VLIVLSWVLFAACLSYVKVML. The Cytoplasmic segment spans residues 409 to 418; it reads GVILRDRSRS. A helical transmembrane segment spans residues 419 to 439; that stretch reads ALLWCGAAVQLGSLIGALLMF. Residues 440 to 460 lie on the Extracellular side of the membrane; it reads PLVNVLKLFSSADYCSLDCSV.

This sequence belongs to the riboflavin transporter family. In terms of tissue distribution, within the small intestine, it is particularly expressed in the jujenum and the ileum. Almost negligible expression in the stomach, duodenum, and large intestine.

The protein localises to the cell membrane. The enzyme catalyses riboflavin(in) = riboflavin(out). Plasma membrane transporter mediating the uptake by cells of the water soluble vitamin B2/riboflavin that plays a key role in biochemical oxidation-reduction reactions of the carbohydrate, lipid, and amino acid metabolism. In Mus musculus (Mouse), this protein is Solute carrier family 52, riboflavin transporter, member 3 (Slc52a3).